Consider the following 190-residue polypeptide: UPF0200 protein TSIB_0920 (190 aa).

Residue 7 to 14 (GMPGSGKG) participates in ATP binding.

The protein belongs to the UPF0200 family.

The polypeptide is UPF0200 protein TSIB_0920 (Thermococcus sibiricus (strain DSM 12597 / MM 739)).